The primary structure comprises 628 residues: WW domain-containing adapter protein with coiled-coil (628 aa).

Disordered regions lie at residues 1–130 (MVMY…DDWS), 152–338 (EKPK…PQSP), and 417–532 (NQSP…SARS). The span at 37–49 (SSDHRHDKMRDST) shows a compositional bias: basic and acidic residues. Residues 74–84 (GKAKSMHLHRV) are compositionally biased toward basic residues. The segment covering 101–121 (NHSAIHSSNSHSSTPSKTSDS) has biased composition (low complexity). Residues 123–156 (YDPADDWSEHISSSGKKYYYNCRTEVSQWEKPKE) form the WW domain. Composition is skewed to basic and acidic residues over residues 152–168 (EKPKEWLEREQRQKETS) and 176–185 (PKDRDYRREA). The segment covering 199–213 (DTSTMLPQNILSQTS) has biased composition (polar residues). Residues 214 to 227 (RHNDRDYRLPRTDS) are compositionally biased toward basic and acidic residues. Low complexity-rich tracts occupy residues 230–260 (SAAPVQQPVKAAVHPAAAPSTVPSSPFTVQP) and 299–331 (SDKSSCTTPSTSSAPGLNLSAAPPSSSSSTVPV). Positions 420-446 (PMSLTSDASSPRSYVSPRISTPQTNTV) are enriched in polar residues. The segment covering 467-486 (GSKQGSSAQTASQQSSAADK) has biased composition (low complexity). Residues 511–532 (PNHNSSTCASSTSAPQNSSARS) show a composition bias toward polar residues. The stretch at 599–625 (QATLREQRILFLRQQIKELEKLKNQNS) forms a coiled coil.

The protein resides in the nucleus. In terms of biological role, acts as a linker between gene transcription and histone H2B monoubiquitination at 'Lys-120' (H2BK120ub1). Positive regulator of amino acid starvation-induced autophagy. Positively regulates MTOR activity. May negatively regulate the ubiquitin proteasome pathway. This chain is WW domain-containing adapter protein with coiled-coil (wac), found in Xenopus tropicalis (Western clawed frog).